Here is a 233-residue protein sequence, read N- to C-terminus: V-type proton ATPase subunit E (233 aa).

This sequence belongs to the V-ATPase E subunit family. As to quaternary structure, V-ATPase is a heteromultimeric enzyme composed of a peripheral catalytic V1 complex (components A to H) attached to an integral membrane V0 proton pore complex (components: a, c, c', c'' and d).

Subunit of the peripheral V1 complex of vacuolar ATPase essential for assembly or catalytic function. V-ATPase is responsible for acidifying a variety of intracellular compartments in eukaryotic cells. This is V-type proton ATPase subunit E (vatE) from Dictyostelium discoideum (Social amoeba).